Consider the following 227-residue polypeptide: Cytochrome c oxidase subunit 2 (227 aa).

Residues 1–14 lie on the Mitochondrial intermembrane side of the membrane; it reads MAYPFQLGLQDATS. The helical transmembrane segment at 15 to 45 threads the bilayer; sequence PIMEELTNFHDHTLMIVFLISSLVLYIISSM. Residues 46-59 are Mitochondrial matrix-facing; that stretch reads LATKMTHTSTMDAQ. The helical transmembrane segment at 60–87 threads the bilayer; sequence SMETIWTILPAVILVLIALPSLRILYMM. Residues 88-227 lie on the Mitochondrial intermembrane side of the membrane; it reads DEINNPVLTV…FFENWSASMI (140 aa). His-161, Cys-196, Glu-198, Cys-200, His-204, and Met-207 together coordinate Cu cation. Residue Glu-198 coordinates Mg(2+).

The protein belongs to the cytochrome c oxidase subunit 2 family. As to quaternary structure, component of the cytochrome c oxidase (complex IV, CIV), a multisubunit enzyme composed of 14 subunits. The complex is composed of a catalytic core of 3 subunits MT-CO1, MT-CO2 and MT-CO3, encoded in the mitochondrial DNA, and 11 supernumerary subunits COX4I, COX5A, COX5B, COX6A, COX6B, COX6C, COX7A, COX7B, COX7C, COX8 and NDUFA4, which are encoded in the nuclear genome. The complex exists as a monomer or a dimer and forms supercomplexes (SCs) in the inner mitochondrial membrane with NADH-ubiquinone oxidoreductase (complex I, CI) and ubiquinol-cytochrome c oxidoreductase (cytochrome b-c1 complex, complex III, CIII), resulting in different assemblies (supercomplex SCI(1)III(2)IV(1) and megacomplex MCI(2)III(2)IV(2)). Found in a complex with TMEM177, COA6, COX18, COX20, SCO1 and SCO2. Interacts with TMEM177 in a COX20-dependent manner. Interacts with COX20. Interacts with COX16. Cu cation is required as a cofactor.

The protein localises to the mitochondrion inner membrane. The catalysed reaction is 4 Fe(II)-[cytochrome c] + O2 + 8 H(+)(in) = 4 Fe(III)-[cytochrome c] + 2 H2O + 4 H(+)(out). Its function is as follows. Component of the cytochrome c oxidase, the last enzyme in the mitochondrial electron transport chain which drives oxidative phosphorylation. The respiratory chain contains 3 multisubunit complexes succinate dehydrogenase (complex II, CII), ubiquinol-cytochrome c oxidoreductase (cytochrome b-c1 complex, complex III, CIII) and cytochrome c oxidase (complex IV, CIV), that cooperate to transfer electrons derived from NADH and succinate to molecular oxygen, creating an electrochemical gradient over the inner membrane that drives transmembrane transport and the ATP synthase. Cytochrome c oxidase is the component of the respiratory chain that catalyzes the reduction of oxygen to water. Electrons originating from reduced cytochrome c in the intermembrane space (IMS) are transferred via the dinuclear copper A center (CU(A)) of subunit 2 and heme A of subunit 1 to the active site in subunit 1, a binuclear center (BNC) formed by heme A3 and copper B (CU(B)). The BNC reduces molecular oxygen to 2 water molecules using 4 electrons from cytochrome c in the IMS and 4 protons from the mitochondrial matrix. The chain is Cytochrome c oxidase subunit 2 (MT-CO2) from Acomys wilsoni (Wilson's spiny mouse).